The following is a 282-amino-acid chain: Phycocyanobilin lyase subunit beta (282 aa).

The protein belongs to the CpcE/RpcE/PecE family. In terms of assembly, cpcE and CpcF associate to form a lyase.

In terms of biological role, required for the chromophorylation of the CpcA gene product. In Pseudanabaena tenuis (strain PCC 7409), this protein is Phycocyanobilin lyase subunit beta (cpcF1).